Here is a 90-residue protein sequence, read N- to C-terminus: Probable Fe(2+)-trafficking protein (90 aa).

This sequence belongs to the Fe(2+)-trafficking protein family.

Could be a mediator in iron transactions between iron acquisition and iron-requiring processes, such as synthesis and/or repair of Fe-S clusters in biosynthetic enzymes. In Herminiimonas arsenicoxydans, this protein is Probable Fe(2+)-trafficking protein.